The chain runs to 114 residues: Large ribosomal subunit protein bL20 (114 aa).

It belongs to the bacterial ribosomal protein bL20 family.

Functionally, binds directly to 23S ribosomal RNA and is necessary for the in vitro assembly process of the 50S ribosomal subunit. It is not involved in the protein synthesizing functions of that subunit. The protein is Large ribosomal subunit protein bL20 of Anaeromyxobacter dehalogenans (strain 2CP-C).